Consider the following 193-residue polypeptide: Ion-translocating oxidoreductase complex subunit B (193 aa).

A hydrophobic region spans residues 1–26 (MSTMLIAVILLTLLALFFGVLLGFAA). A 4Fe-4S domain is found at 32-90 (EGNPIVDELEAILPQTQCGQCGYPGCRPYAEAIANGDKVNKCPPGGTATMEKLANLMGV). The [4Fe-4S] cluster site is built by Cys-49, Cys-52, Cys-57, Cys-73, Cys-114, Cys-117, Cys-120, Cys-124, Cys-144, Cys-147, Cys-150, and Cys-154. 4Fe-4S ferredoxin-type domains are found at residues 105–134 (KVAY…GAGK) and 136–164 (MHTV…MIPV).

The protein belongs to the 4Fe4S bacterial-type ferredoxin family. RnfB subfamily. In terms of assembly, the complex is composed of six subunits: RnfA, RnfB, RnfC, RnfD, RnfE and RnfG. Requires [4Fe-4S] cluster as cofactor.

It localises to the cell inner membrane. In terms of biological role, part of a membrane-bound complex that couples electron transfer with translocation of ions across the membrane. The sequence is that of Ion-translocating oxidoreductase complex subunit B from Shewanella sp. (strain ANA-3).